The primary structure comprises 956 residues: Translation initiation factor IF-2 (956 aa).

Positions 68–357 (APEAAAPKAP…GVSVPRGDGN (290 aa)) are disordered. Low complexity-rich tracts occupy residues 86 to 123 (AKPA…APAV), 141 to 156 (PGNN…PRAG), 164 to 175 (PAAAPASGAGRP), and 212 to 235 (GPRP…RPAA). Gly residues-rich tracts occupy residues 236 to 257 (GSGG…GGGN) and 276 to 324 (RGAG…GAGR). Positions 325 to 334 (GKQRKSKRAK) are enriched in basic residues. A tr-type G domain is found at 449–620 (ARPPVVTVMG…AVMLTADAAL (172 aa)). Positions 458–465 (GHVDHGKT) are G1. 458-465 (GHVDHGKT) is a binding site for GTP. A G2 region spans residues 483-487 (GITQH). Residues 508–511 (DTPG) form a G3 region. Residues 508–512 (DTPGH) and 562–565 (NKID) contribute to the GTP site. The interval 562–565 (NKID) is G4. The segment at 598-600 (SAR) is G5.

Belongs to the TRAFAC class translation factor GTPase superfamily. Classic translation factor GTPase family. IF-2 subfamily.

Its subcellular location is the cytoplasm. Its function is as follows. One of the essential components for the initiation of protein synthesis. Protects formylmethionyl-tRNA from spontaneous hydrolysis and promotes its binding to the 30S ribosomal subunits. Also involved in the hydrolysis of GTP during the formation of the 70S ribosomal complex. In Renibacterium salmoninarum (strain ATCC 33209 / DSM 20767 / JCM 11484 / NBRC 15589 / NCIMB 2235), this protein is Translation initiation factor IF-2.